A 447-amino-acid chain; its full sequence is NADH peroxidase (447 aa).

Residues 7–11 (GSSHG), E32, C42, 110–113 (SPGA), and R132 each bind FAD. H10 serves as the catalytic Proton acceptor. The active-site Redox-active is the C42. Position 42 is a cysteine sulfenic acid (-SOH) (C42). The NAD(+) site is built by I160, D179, Y188, and G243. Residue D281 coordinates FAD. An NAD(+)-binding site is contributed by A297. A299 is an FAD binding site. An NAD(+)-binding site is contributed by G328.

The protein belongs to the class-III pyridine nucleotide-disulfide oxidoreductase family. Homotetramer. FAD is required as a cofactor.

The enzyme catalyses H2O2 + NADH + H(+) = NAD(+) + 2 H2O. In terms of biological role, peroxidase whose active site is a redox-active cysteine-sulfenic acid. In Enterococcus faecalis (strain ATCC 700802 / V583), this protein is NADH peroxidase (npr).